A 240-amino-acid chain; its full sequence is Ribonuclease 3 (240 aa).

In terms of domain architecture, RNase III spans 9 to 141 (VEEFQKKTGI…LLAAIYLDQG (133 aa)). Position 54 (Glu-54) interacts with Mg(2+). Asp-58 is an active-site residue. Residues Asp-127 and Glu-130 each contribute to the Mg(2+) site. Residue Glu-130 is part of the active site. The DRBM domain maps to 168-237 (DYKTALQEIV…ARIAYEKLLK (70 aa)).

The protein belongs to the ribonuclease III family. Homodimer. Requires Mg(2+) as cofactor.

The protein resides in the cytoplasm. The catalysed reaction is Endonucleolytic cleavage to 5'-phosphomonoester.. Its function is as follows. Digests double-stranded RNA. Involved in the processing of primary rRNA transcript to yield the immediate precursors to the large and small rRNAs (23S and 16S). Processes some mRNAs, and tRNAs when they are encoded in the rRNA operon. Processes pre-crRNA and tracrRNA of type II CRISPR loci if present in the organism. This is Ribonuclease 3 from Thermotoga sp. (strain RQ2).